A 586-amino-acid chain; its full sequence is Glutathione hydrolase 5 proenzyme (586 aa).

Topologically, residues 1 to 8 (MARGYGAT) are cytoplasmic. Residues 9-29 (VSLVLLGLGLALAVIVLAVVL) traverse the membrane as a helical; Signal-anchor for type II membrane protein segment. Residues 30–586 (SRHQAPCGPQ…LRKSGEAAGY (557 aa)) are Extracellular-facing. The N-linked (GlcNAc...) asparagine glycan is linked to N98. Residue R110 participates in L-glutamate binding. Residues N204, N303, and N347 are each glycosylated (N-linked (GlcNAc...) asparagine). Catalysis depends on T388, which acts as the Nucleophile. L-glutamate-binding positions include T406, E427, and 469 to 470 (SS). N-linked (GlcNAc...) asparagine glycosylation is found at N535 and N550.

The protein belongs to the gamma-glutamyltransferase family. In terms of assembly, heterodimer composed of the light and heavy chains. The active site is located in the light chain. Cleaved by autocatalysis into a large and a small subunit. In terms of processing, glycosylated. Expressed in follicular dendritic cells in lymphoid follicles (at protein level).

The protein localises to the membrane. It catalyses the reaction glutathione + H2O = L-cysteinylglycine + L-glutamate. The enzyme catalyses an S-substituted glutathione + H2O = an S-substituted L-cysteinylglycine + L-glutamate. The catalysed reaction is leukotriene C4 + H2O = leukotriene D4 + L-glutamate. It carries out the reaction S-[(2E,6E,10E)-geranylgeranyl]-L-glutathione + H2O = S-[(2E,6E,10E)-geranylgeranyl]-L-cysteinylglycine + L-glutamate. It catalyses the reaction an N-terminal (5-L-glutamyl)-[peptide] + an alpha-amino acid = 5-L-glutamyl amino acid + an N-terminal L-alpha-aminoacyl-[peptide]. The protein operates within sulfur metabolism; glutathione metabolism. It participates in lipid metabolism; leukotriene D4 biosynthesis. With respect to regulation, inhibited by serine-borate. Its function is as follows. Cleaves the gamma-glutamyl bond of extracellular glutathione tripeptide (gamma-Glu-Cys-Gly) and certain glutathione conjugates. Hydrolyzes glutathione releasing L-Glu and Cys-Gly dipeptide which is further metabolized to maintain extracellular cysteine levels but also to provide cysteine necessary for intracellular glutathione synthesis. Among glutathione-S-conjugates metabolizes leukotriene C4 (LTC4) and S-geranylgeranyl-glutathione (GGG), but is inactive toward gamma-glutamyl leucine. Converts extracellular LTC4 to LTD4 during acute inflammatory response. Acts as a negative regulator of GGG bioactivity. GGT5 (via GGG catabolism) and ABCC1 (via extracellular transport) establish GGG gradients within lymphoid tissues to position P2RY8-positive lymphocytes at germinal centers in lymphoid follicles and restrict their chemotactic transmigration from blood vessels to bone marrow parenchyma. The transpeptidation reaction, i.e. the transfer of gamma-glutamyl moiety to an acceptor molecule to yield a new gamma-glutamyl compound requires high concentration of dipeptide acceptor and is considered nonphysiological. This Homo sapiens (Human) protein is Glutathione hydrolase 5 proenzyme (GGT5).